We begin with the raw amino-acid sequence, 499 residues long: Diacylglycerol kinase 1 (499 aa).

The DAGKc domain occupies 41 to 194 (APCCPVVVFI…IDSWHIIMRM (154 aa)). A disordered region spans residues 442-479 (PCKSKSVNDPSSPMCCSNHDDDERNSLEDEDEWEEGRK). The span at 446–456 (KSVNDPSSPMC) shows a compositional bias: polar residues. A compositionally biased stretch (basic and acidic residues) spans 459-468 (NHDDDERNSL).

It belongs to the eukaryotic diacylglycerol kinase family. In terms of assembly, monomer. Highly expressed in roots.

The catalysed reaction is a 1,2-diacyl-sn-glycerol + ATP = a 1,2-diacyl-sn-glycero-3-phosphate + ADP + H(+). Its function is as follows. Phosphorylates the second messenger diacylglycerol (DAG) to generate phosphatidic acid (PA), another important signaling molecule. PA is required for plant development and responses to abiotic stress. May play a role in disease resistance responses to pathogen attack. Modulates root architecture by regulating the ratio of DAG and PA, which have opposite effect on the promotion or suppression of lateral roots vs seminal roots. Suppresses lateral root number, but promotes seminal root and crown root thickness. The polypeptide is Diacylglycerol kinase 1 (Oryza sativa subsp. japonica (Rice)).